The sequence spans 780 residues: Probable trehalase (780 aa).

The segment at Met-1–His-48 is disordered. 2 positions are modified to phosphoserine: Ser-52 and Ser-53. Thr-88 carries the post-translational modification Phosphothreonine. Phosphoserine is present on Ser-112. Residues Arg-331, Trp-338–Asp-339, Asn-375, Arg-384, Arg-384–Gln-386, and Gly-505 contribute to the substrate site. Catalysis depends on proton donor/acceptor residues Asp-507 and Glu-703.

It belongs to the glycosyl hydrolase 37 family.

The enzyme catalyses alpha,alpha-trehalose + H2O = alpha-D-glucose + beta-D-glucose. This is Probable trehalase (NTH2) from Saccharomyces cerevisiae (strain ATCC 204508 / S288c) (Baker's yeast).